The primary structure comprises 276 residues: MGQKVNPHGFRLGITTDHVSHWFADSTKSGQRYKDFVREDIRIRQLMSTGMERAGIAKVEIERTRDRVRVDIHTARPGIVIGRRGAEADRIRGELEKLTGKQVQLNILEVKNPEMEAQLVAQGVAEQLTSRVAFRRAMKKAMQSAQRAGAKGIRIACSGRLGGAEMSRSEFYREGRVPLHTLRANIDYGFYEAKTTFGRIGVKVWIYKGDVTAKELAAQAASAPSRGPRSDRGGRPGGADRGDRRRRNDRPAADAAPAAEAPAVEAAPAAAEGGQA.

In terms of domain architecture, KH type-2 spans 43 to 111 (IRQLMSTGME…QVQLNILEVK (69 aa)). Low complexity predominate over residues 218–227 (AQAASAPSRG). The interval 218-276 (AQAASAPSRGPRSDRGGRPGGADRGDRRRRNDRPAADAAPAAEAPAVEAAPAAAEGGQA) is disordered. The segment covering 228–243 (PRSDRGGRPGGADRGD) has biased composition (basic and acidic residues). The segment covering 253-276 (ADAAPAAEAPAVEAAPAAAEGGQA) has biased composition (low complexity).

Belongs to the universal ribosomal protein uS3 family. As to quaternary structure, part of the 30S ribosomal subunit. Forms a tight complex with proteins S10 and S14.

Functionally, binds the lower part of the 30S subunit head. Binds mRNA in the 70S ribosome, positioning it for translation. The chain is Small ribosomal subunit protein uS3 from Pseudarthrobacter chlorophenolicus (strain ATCC 700700 / DSM 12829 / CIP 107037 / JCM 12360 / KCTC 9906 / NCIMB 13794 / A6) (Arthrobacter chlorophenolicus).